Here is a 421-residue protein sequence, read N- to C-terminus: Tyrosine-protein phosphatase non-receptor type 20 (421 aa).

The disordered stretch occupies residues 1-58 (MSSPGNVRQKHGRDNDEHEGDSDDLNLQKSLPSSSQQKTPTKPVFGNKVNSESVKTSH). Residues 27–41 (LQKSLPSSSQQKTPT) show a composition bias toward low complexity. Residues 48 to 58 (KVNSESVKTSH) are compositionally biased toward polar residues. A Phosphoserine modification is found at S76. Residues 93-116 (RWSSVDPESAGPSKTVSTVLSESS) form a disordered region. Residues 104–116 (PSKTVSTVLSESS) show a composition bias toward polar residues. S122 is modified (phosphoserine). Residues 160–413 (IIREFLELEE…QFCYEIVLEV (254 aa)) enclose the Tyrosine-protein phosphatase domain. Residues D324, 354-360 (CSAGVGR), and Q398 contribute to the substrate site. The active-site Phosphocysteine intermediate is C354.

The protein belongs to the protein-tyrosine phosphatase family. Non-receptor class subfamily.

It is found in the nucleus. It localises to the cytoplasm. Its subcellular location is the cytoskeleton. The protein localises to the microtubule organizing center. The protein resides in the centrosome. It carries out the reaction O-phospho-L-tyrosyl-[protein] + H2O = L-tyrosyl-[protein] + phosphate. Its function is as follows. Tyrosine-protein phosphatase targeted to sites of actin polymerization in response of varied extracellular stimuli. Has tyrosine phosphatase activity towards various tyrosyl phosphorylated substrates. This Rattus norvegicus (Rat) protein is Tyrosine-protein phosphatase non-receptor type 20 (Ptpn20).